The chain runs to 97 residues: Integration host factor subunit alpha (97 aa).

This sequence belongs to the bacterial histone-like protein family. In terms of assembly, heterodimer of an alpha and a beta chain.

This protein is one of the two subunits of integration host factor, a specific DNA-binding protein that functions in genetic recombination as well as in transcriptional and translational control. The protein is Integration host factor subunit alpha of Acinetobacter baylyi (strain ATCC 33305 / BD413 / ADP1).